The primary structure comprises 346 residues: Isopentenyl-diphosphate delta-isomerase (346 aa).

A substrate-binding site is contributed by 9–10 (RK). FMN is bound by residues serine 67, 68–70 (SMT), serine 98, and asparagine 127. Residue 98 to 100 (SQR) participates in substrate binding. Residue glutamine 162 coordinates substrate. Glutamate 163 serves as a coordination point for Mg(2+). FMN contacts are provided by residues lysine 194, threonine 224, 274-276 (GIR), and 295-296 (AA).

The protein belongs to the IPP isomerase type 2 family. Homooctamer. Dimer of tetramers. The cofactor is FMN. NADPH is required as a cofactor. It depends on Mg(2+) as a cofactor.

Its subcellular location is the cytoplasm. It catalyses the reaction isopentenyl diphosphate = dimethylallyl diphosphate. In terms of biological role, involved in the biosynthesis of isoprenoids. Catalyzes the 1,3-allylic rearrangement of the homoallylic substrate isopentenyl (IPP) to its allylic isomer, dimethylallyl diphosphate (DMAPP). The chain is Isopentenyl-diphosphate delta-isomerase from Stutzerimonas stutzeri (strain A1501) (Pseudomonas stutzeri).